The sequence spans 254 residues: Nickel import ATP-binding protein NikD (254 aa).

The region spanning 2-241 (PQQIELRNIA…PKHAVTRSLV (240 aa)) is the ABC transporter domain. Position 36–43 (36–43 (GGSGSGKS)) interacts with ATP.

Belongs to the ABC transporter superfamily. Nickel importer (TC 3.A.1.5.3) family. In terms of assembly, the complex is composed of two ATP-binding proteins (NikD and NikE), two transmembrane proteins (NikB and NikC) and a solute-binding protein (NikA).

It localises to the cell inner membrane. The enzyme catalyses Ni(2+)(out) + ATP + H2O = Ni(2+)(in) + ADP + phosphate + H(+). Part of the ABC transporter complex NikABCDE involved in nickel import. Responsible for energy coupling to the transport system. The chain is Nickel import ATP-binding protein NikD from Escherichia coli (strain UTI89 / UPEC).